Reading from the N-terminus, the 297-residue chain is Bifonsecin B biosynthesis cluster protein A (297 aa).

The N-terminal stretch at 1–20 is a signal peptide; it reads MHFWWTAISAGLLCLPQALG. N-linked (GlcNAc...) asparagine glycans are attached at residues asparagine 26, asparagine 56, asparagine 75, asparagine 124, asparagine 175, asparagine 210, and asparagine 280.

The protein belongs to the bfoA family.

Its function is as follows. Part of the gene cluster that mediates the biosynthesis of bifonsecin B, a dimeric gamma-naphthopyrone. The first step in the biosynthesis of bifonsecin B is the production of gamma-naphthopyrone precursor YWA1 by the non-reducing polyketide synthase albA, via condensation of one acetyl-CoA starter unit with 6 malonyl-CoA units. YWA1 is then methylated by bfoE at position C-6 to yield foncesin which is further methylated at position C-8 by bfoD to produce fonsecin B. A key enzyme in the biosynthetic pathway is the cytochrome P450 monooxygenase bfoB which catalyzes the oxidative dimerization of fonsecin B to bifonsecin B. Bfob also catalyzes the oxidative dimerization of rubrofusarin B into nigerone. The stereoselectivity of bfoB is influenced by the two natural monomeric substrates; homodimerization of fonsecin B yields a stereochemically pure biaryl, M-foncerine B, while rubrofusarin B yields a mixture of enantiomers M- and P-nigerone. The function of bfoA within the bifonsecin B biosynthesis pathway has not been determined yet. The chain is Bifonsecin B biosynthesis cluster protein A from Aspergillus brasiliensis (strain CBS 101740 / IMI 381727 / IBT 21946).